The following is a 71-amino-acid chain: Long neurotoxin 1 (71 aa).

Cystine bridges form between C3–C20, C14–C41, C26–C30, C45–C56, and C57–C62.

It belongs to the three-finger toxin family. Long-chain subfamily. Type II alpha-neurotoxin sub-subfamily. In terms of tissue distribution, expressed by the venom gland.

It is found in the secreted. Functionally, binds with high affinity to muscular (alpha-1/CHRNA1) and neuronal (alpha-7/CHRNA7) nicotinic acetylcholine receptor (nAChR) and inhibits acetylcholine from binding to the receptor, thereby impairing neuromuscular and neuronal transmission. In Naja nivea (Cape cobra), this protein is Long neurotoxin 1.